The chain runs to 127 residues: Aspartate 1-decarboxylase (127 aa).

Catalysis depends on Ser-25, which acts as the Schiff-base intermediate with substrate; via pyruvic acid. Residue Ser-25 is modified to Pyruvic acid (Ser). A substrate-binding site is contributed by Thr-57. Catalysis depends on Tyr-58, which acts as the Proton donor. Residue 73-75 coordinates substrate; the sequence is GAA.

This sequence belongs to the PanD family. Heterooctamer of four alpha and four beta subunits. Requires pyruvate as cofactor. Post-translationally, is synthesized initially as an inactive proenzyme, which is activated by self-cleavage at a specific serine bond to produce a beta-subunit with a hydroxyl group at its C-terminus and an alpha-subunit with a pyruvoyl group at its N-terminus.

The protein localises to the cytoplasm. It carries out the reaction L-aspartate + H(+) = beta-alanine + CO2. It functions in the pathway cofactor biosynthesis; (R)-pantothenate biosynthesis; beta-alanine from L-aspartate: step 1/1. Functionally, catalyzes the pyruvoyl-dependent decarboxylation of aspartate to produce beta-alanine. In Neisseria meningitidis serogroup B (strain ATCC BAA-335 / MC58), this protein is Aspartate 1-decarboxylase.